Consider the following 166-residue polypeptide: UPF0260 protein GbCGDNIH1_2046 (166 aa).

Residues 147–166 form a disordered region; the sequence is RFPRPRRPRQEPAGKTADES. Positions 154-166 are enriched in basic and acidic residues; that stretch reads PRQEPAGKTADES.

This sequence belongs to the UPF0260 family.

This chain is UPF0260 protein GbCGDNIH1_2046, found in Granulibacter bethesdensis (strain ATCC BAA-1260 / CGDNIH1).